Reading from the N-terminus, the 311-residue chain is Probable deoxyhypusine synthase (311 aa).

Catalysis depends on Lys284, which acts as the Nucleophile.

It belongs to the deoxyhypusine synthase family. It depends on NAD(+) as a cofactor.

It carries out the reaction [eIF5A protein]-L-lysine + spermidine = [eIF5A protein]-deoxyhypusine + propane-1,3-diamine. It functions in the pathway protein modification; eIF5A hypusination. Its function is as follows. Catalyzes the NAD-dependent oxidative cleavage of spermidine and the subsequent transfer of the butylamine moiety of spermidine to the epsilon-amino group of a specific lysine residue of the eIF-5A precursor protein to form the intermediate deoxyhypusine residue. In Sulfurisphaera tokodaii (strain DSM 16993 / JCM 10545 / NBRC 100140 / 7) (Sulfolobus tokodaii), this protein is Probable deoxyhypusine synthase (dys).